We begin with the raw amino-acid sequence, 538 residues long: Sodium/hydrogen exchanger 1 (538 aa).

The Cytoplasmic portion of the chain corresponds to 1–19 (MLDSLVSKLPSLSTSDHAS). A helical transmembrane segment spans residues 20 to 40 (VVALNLFVALLCACIVLGHLL). The Vacuolar portion of the chain corresponds to 41-45 (EENRW). The helical transmembrane segment at 46–66 (MNESITALLIGLGTGVTILLI) threads the bilayer. Residues 67-73 (SKGKSSH) are Cytoplasmic-facing. An intramembrane region (helical) is located at residues 74–94 (LLVFSEDLFFIYLLPPIIFNA). Topologically, residues 95 to 106 (GFQVKKKQFFRN) are cytoplasmic. Residues 107-127 (FVTIMLFGAVGTIISCTIISL) traverse the membrane as a helical segment. The Vacuolar segment spans residues 128 to 146 (GVTQFFKKLDIGTFDLGDY). 2 intramembrane regions (helical) span residues 147-166 (LAIG…QVLN) and 172-192 (LLYS…VVVF). Residues 193–216 (NAIQSFDLTHLNHEAAFHLLGNFL) lie on the Vacuolar side of the membrane. The helical transmembrane segment at 217–237 (YLFLLSTLLGAATGLISAYVI) threads the bilayer. Topologically, residues 238–262 (KKLYFGRHSTDREVALMMLMAYLSY) are cytoplasmic. The helical transmembrane segment at 263–283 (MLAELFDLSGILTVFFCGIVM) threads the bilayer. Topologically, residues 284 to 302 (SHYTWHNVTESSRITTKHT) are vacuolar. Asparagine 290 carries an N-linked (GlcNAc...) asparagine glycan. The chain crosses the membrane as a helical span at residues 303–323 (FATLSFLAETFIFLYVGMDAL). The Cytoplasmic segment spans residues 324–342 (DIDKWRSVSDTPGTSIAVS). Residues 343 to 363 (SILMGLVMVGRAAFVFPLSFL) form a helical membrane-spanning segment. Over 364–378 (SNLAKKNQSEKINFN) the chain is Vacuolar. An N-linked (GlcNAc...) asparagine glycan is attached at asparagine 370. Residues 379–399 (MQVVIWWSGLMRGAVSMALAY) traverse the membrane as a helical segment. At 400-413 (NKFTRAGHTDVRGN) the chain is on the cytoplasmic side. A helical membrane pass occupies residues 414-434 (AIMITSTITVCLFSTVVFGML). Over 435–538 (TKPLISYLLP…ERNPPDLSKA (104 aa)) the chain is Vacuolar. N-linked (GlcNAc...) asparagine glycosylation is present at asparagine 447. Residues 496-518 (RTVHYYWRQFDDSFMRPVFGGRG) are interaction with CML18/CAM15.

The protein belongs to the monovalent cation:proton antiporter 1 (CPA1) transporter (TC 2.A.36) family. As to quaternary structure, calcium and pH-dependent interaction with CML18/CAM15 (increases when pH decreases, better at pH 5.5 than at pH 7.5). As to expression, ubiquitous, with higher levels around vascular tissues and guard cells.

It localises to the vacuole membrane. Its subcellular location is the endoplasmic reticulum membrane. The protein localises to the golgi apparatus membrane. The catalysed reaction is Na(+)(in) + H(+)(out) = Na(+)(out) + H(+)(in). It catalyses the reaction K(+)(in) + H(+)(out) = K(+)(out) + H(+)(in). In terms of biological role, acts in low affinity electroneutral exchange of protons for cations such as Na(+) or K(+) across membranes. Can also exchange Li(+) and Cs(+) with a lower affinity. Involved in vacuolar ion compartmentalization necessary for cell volume regulation and cytoplasmic Na(+) detoxification. Required during leaves expansion, probably to stimulate epidermal cell expansion. Confers competence to grow in high salinity conditions. This is Sodium/hydrogen exchanger 1 (NHX1) from Arabidopsis thaliana (Mouse-ear cress).